Reading from the N-terminus, the 228-residue chain is Sodium channel regulatory subunit beta-4 (228 aa).

A signal peptide spans 1–30; that stretch reads MPGAGDGGKAPARWLGTGLLGLFLLPVTLS. Residues 31–148 enclose the Ig-like C2-type domain; sequence LEVSVGKATD…NNLQHHATIF (118 aa). The Extracellular portion of the chain corresponds to 31 to 162; it reads LEVSVGKATD…DRLEEVDNTV (132 aa). 3 N-linked (GlcNAc...) asparagine glycosylation sites follow: asparagine 45, asparagine 71, and asparagine 113. Residues cysteine 53 and cysteine 131 are joined by a disulfide bond. A helical transmembrane segment spans residues 163 to 183; the sequence is TLIILAVVGGVIGLLILILLI. Residues 184 to 228 are Cytoplasmic-facing; the sequence is KKLIIFILKKTREKKKECLVSSSGNDNTENGLPGSKAEEKPPSKV. Residues 200–228 are disordered; that stretch reads ECLVSSSGNDNTENGLPGSKAEEKPPSKV. Residues 203 to 213 show a composition bias toward polar residues; the sequence is VSSSGNDNTEN. Basic and acidic residues predominate over residues 219–228; that stretch reads KAEEKPPSKV.

It belongs to the sodium channel auxiliary subunit SCN4B (TC 8.A.17) family. As to quaternary structure, a voltage-gated sodium (Nav) channel consists of an ion-conducting pore-forming alpha subunit functional on its own that is regulated by one or more beta subunits. The beta subunit SCN4B is disulfide-linked to the pore-forming alpha subunit. Interacts with SCN1A; regulatory subunit of SCN1A/Nav1.1. Interacts with SCN2A; regulatory subunit of SCN2A/Nav1.2. In terms of processing, contains an interchain disulfide bond with SCN2A. N-glycosylated. As to expression, expressed at a high level in dorsal root ganglia, at a lower level in brain, spinal cord, skeletal muscle and heart. Expressed in the atrium.

It localises to the cell membrane. Its function is as follows. Regulatory subunit of multiple voltage-gated sodium (Nav) channels directly mediating the depolarization of excitable membranes. Navs, also called VGSCs (voltage-gated sodium channels) or VDSCs (voltage-dependent sodium channels), operate by switching between closed and open conformations depending on the voltage difference across the membrane. In the open conformation they allow Na(+) ions to selectively pass through the pore, along their electrochemical gradient. The influx of Na+ ions provokes membrane depolarization, initiating the propagation of electrical signals throughout cells and tissues. The accessory beta subunits participate in localization and functional modulation of the Nav channels. Modulates the activity of SCN1A/Nav1.1. Modulates the activity of SCN2A/Nav1.2. This chain is Sodium channel regulatory subunit beta-4, found in Homo sapiens (Human).